The chain runs to 699 residues: Endogenous retrovirus group K member 19 Env polyprotein (699 aa).

A disordered region spans residues Met-1–Pro-47. An N-terminal signal peptide occupies residues Met-1–Ser-89. Over residues Ala-10–Arg-20 the composition is skewed to basic residues. At Leu-90–Thr-632 the chain is on the extracellular side. N-linked (GlcNAc...) asparagine glycosylation is found at Asn-100, Asn-128, Asn-153, Asn-274, Asn-355, Asn-372, and Asn-461. The interval Phe-466–Val-486 is fusion peptide. Asn-507, Asn-554, Asn-566, and Asn-585 each carry an N-linked (GlcNAc...) asparagine glycan. The chain crosses the membrane as a helical span at residues Ile-633 to Leu-653. Residues Val-654–Val-699 are Cytoplasmic-facing.

Belongs to the beta type-B retroviral envelope protein family. HERV class-II K(HML-2) env subfamily. As to quaternary structure, the surface (SU) and transmembrane (TM) proteins form a heterodimer. SU and TM are attached by noncovalent interactions or by a labile interchain disulfide bond. Post-translationally, specific enzymatic cleavages in vivo yield the mature SU and TM proteins.

It localises to the cell membrane. The protein localises to the virion. In terms of biological role, retroviral envelope proteins mediate receptor recognition and membrane fusion during early infection. Endogenous envelope proteins may have kept, lost or modified their original function during evolution. This endogenous envelope protein has lost its original fusogenic properties. Functionally, SU mediates receptor recognition. TM anchors the envelope heterodimer to the viral membrane through one transmembrane domain. The other hydrophobic domain, called fusion peptide, mediates fusion of the viral membrane with the target cell membrane. The protein is Endogenous retrovirus group K member 19 Env polyprotein (ERVK-19) of Homo sapiens (Human).